We begin with the raw amino-acid sequence, 86 residues long: Toxin CngtIV (86 aa).

Positions 1–19 (MNSLLIITACLVLIGTVWA) are cleaved as a signal peptide. In terms of domain architecture, LCN-type CS-alpha/beta spans 20-84 (KDGYLVDVKG…TWPLPNKRCG (65 aa)). 4 disulfide bridges follow: C30–C83, C34–C59, C43–C64, and C47–C66.

It belongs to the long (4 C-C) scorpion toxin superfamily. Sodium channel inhibitor family. Beta subfamily. Expressed by the venom gland.

It is found in the secreted. Beta toxins bind voltage-independently at site-4 of sodium channels (Nav) and shift the voltage of activation toward more negative potentials thereby affecting sodium channel activation and promoting spontaneous and repetitive firing. The sequence is that of Toxin CngtIV from Centruroides noxius (Mexican scorpion).